The sequence spans 482 residues: Guanine nucleotide exchange factor SRM1 (482 aa).

The segment covering Met-1–Asp-11 has biased composition (polar residues). The segment at Met-1–Ser-22 is disordered. Residues Ala-15–Ala-26 carry the Nuclear localization signal motif. RCC1 repeat units lie at residues Pro-45–Glu-101, Ser-103–Lys-152, Asn-183–Glu-238, Glu-239–Lys-291, Asp-292–Gln-347, Gly-349–Gln-411, and Asn-412–Val-466. The interval Lys-128 to Phe-158 is disordered. Positions Asp-131 to Glu-145 are enriched in acidic residues. Phosphoserine occurs at positions 135 and 136.

Component of a multicomponent complex composed of six to seven proteins, which has a collective molecular mass greater than 150 kDa. Interacts with GSP1 and YRB2. Phosphorylated; possibly by KSP1.

It localises to the nucleus. Its function is as follows. Guanine nucleotide exchange factor that promotes the exchange of GSP1/GSP2-bound GDP by GTP and controls RNA metabolism and transport. Involved in yeast pheromone response pathway and in mRNA metabolism. Involved in nuclear pore complex (NPC) assembly and required for mRNA and ribosome nuclear export. Binds chromatin and is involved NPC-mediated transcriptional control. This chain is Guanine nucleotide exchange factor SRM1 (SRM1), found in Saccharomyces cerevisiae (strain ATCC 204508 / S288c) (Baker's yeast).